The chain runs to 134 residues: Putative transposase InsN for insertion sequence element IS911A (134 aa).

The protein belongs to the transposase 8 family.

Involved in the transposition of the insertion sequence IS911. The polypeptide is Putative transposase InsN for insertion sequence element IS911A (insN1) (Escherichia coli (strain K12)).